The chain runs to 143 residues: Cytochrome c-type biogenesis protein CcmE (143 aa).

Residues Met-1 to Lys-8 are Cytoplasmic-facing. A helical; Signal-anchor for type II membrane protein membrane pass occupies residues Leu-9 to Ala-29. The Periplasmic portion of the chain corresponds to Leu-30–Gln-143. 2 residues coordinate heme: His-124 and Tyr-128.

It belongs to the CcmE/CycJ family.

It is found in the cell inner membrane. Heme chaperone required for the biogenesis of c-type cytochromes. Transiently binds heme delivered by CcmC and transfers the heme to apo-cytochromes in a process facilitated by CcmF and CcmH. The polypeptide is Cytochrome c-type biogenesis protein CcmE (Legionella pneumophila).